Reading from the N-terminus, the 85-residue chain is Small ribosomal subunit protein bS20 (85 aa).

Residues 1–22 (MPQIKSAIKRVKTQNATNKRNA) form a disordered region. A compositionally biased stretch (polar residues) spans 13–22 (TQNATNKRNA).

This sequence belongs to the bacterial ribosomal protein bS20 family.

Functionally, binds directly to 16S ribosomal RNA. The chain is Small ribosomal subunit protein bS20 from Lactobacillus acidophilus (strain ATCC 700396 / NCK56 / N2 / NCFM).